The sequence spans 120 residues: Large ribosomal subunit protein bL19 (120 aa).

It belongs to the bacterial ribosomal protein bL19 family.

This protein is located at the 30S-50S ribosomal subunit interface and may play a role in the structure and function of the aminoacyl-tRNA binding site. The protein is Large ribosomal subunit protein bL19 of Marinomonas sp. (strain MWYL1).